Here is a 33-residue protein sequence, read N- to C-terminus: Photosystem II reaction center protein Psb30 (33 aa).

The chain crosses the membrane as a helical span at residues 5–25 (VILQLGSILLVVAAGPLVIVL).

The protein belongs to the Psb30/Ycf12 family. PSII is composed of 1 copy each of membrane proteins PsbA, PsbB, PsbC, PsbD, PsbE, PsbF, PsbH, PsbI, PsbJ, PsbK, PsbL, PsbM, PsbT, PsbX, PsbY, PsbZ, Psb30/Ycf12, peripheral proteins of the oxygen-evolving complex and a large number of cofactors. It forms dimeric complexes.

It is found in the plastid. It localises to the chloroplast thylakoid membrane. A core subunit of photosystem II (PSII), probably helps stabilize the reaction center. The protein is Photosystem II reaction center protein Psb30 of Oltmannsiellopsis viridis (Marine flagellate).